A 176-amino-acid polypeptide reads, in one-letter code: Orotate phosphoribosyltransferase (176 aa).

5-phospho-alpha-D-ribose 1-diphosphate-binding positions include R90, K91, K94, and 116 to 124 (EDVTTTGGS). Positions 120 and 148 each coordinate orotate.

Belongs to the purine/pyrimidine phosphoribosyltransferase family. PyrE subfamily. As to quaternary structure, homodimer. Mg(2+) is required as a cofactor.

The enzyme catalyses orotidine 5'-phosphate + diphosphate = orotate + 5-phospho-alpha-D-ribose 1-diphosphate. It functions in the pathway pyrimidine metabolism; UMP biosynthesis via de novo pathway; UMP from orotate: step 1/2. In terms of biological role, catalyzes the transfer of a ribosyl phosphate group from 5-phosphoribose 1-diphosphate to orotate, leading to the formation of orotidine monophosphate (OMP). This chain is Orotate phosphoribosyltransferase, found in Methanocaldococcus jannaschii (strain ATCC 43067 / DSM 2661 / JAL-1 / JCM 10045 / NBRC 100440) (Methanococcus jannaschii).